The following is a 342-amino-acid chain: GTPase Obg (342 aa).

One can recognise an Obg domain in the interval 1-159 (MKFLDEAKVY…HWLWLRLKLI (159 aa)). The OBG-type G domain maps to 160-327 (ADAGLVGLPN…ALRALMAAMD (168 aa)). GTP is bound by residues 166–173 (GLPNAGKS), 191–195 (FTTLH), 212–215 (DIPG), 279–282 (SKAD), and 308–310 (SAA). Positions 173 and 193 each coordinate Mg(2+).

It belongs to the TRAFAC class OBG-HflX-like GTPase superfamily. OBG GTPase family. As to quaternary structure, monomer. Mg(2+) is required as a cofactor.

Its subcellular location is the cytoplasm. In terms of biological role, an essential GTPase which binds GTP, GDP and possibly (p)ppGpp with moderate affinity, with high nucleotide exchange rates and a fairly low GTP hydrolysis rate. Plays a role in control of the cell cycle, stress response, ribosome biogenesis and in those bacteria that undergo differentiation, in morphogenesis control. In Methylobacterium nodulans (strain LMG 21967 / CNCM I-2342 / ORS 2060), this protein is GTPase Obg.